The primary structure comprises 315 residues: Acyl transferase (315 aa).

Catalysis depends on charge relay system residues serine 116, aspartate 213, and histidine 243.

Belongs to the LuxD family.

It functions in the pathway lipid metabolism; fatty acid reduction for biolumincescence. In terms of biological role, acyl transferase is part of the fatty acid reductase system required for aldehyde biosynthesis; it produces fatty acids for the luminescent reaction. The sequence is that of Acyl transferase from Photobacterium leiognathi.